The chain runs to 156 residues: Ribosome maturation factor RimP (156 aa).

The protein belongs to the RimP family.

Its subcellular location is the cytoplasm. Functionally, required for maturation of 30S ribosomal subunits. This Synechococcus sp. (strain JA-2-3B'a(2-13)) (Cyanobacteria bacterium Yellowstone B-Prime) protein is Ribosome maturation factor RimP.